A 198-amino-acid chain; its full sequence is NAD(P)H dehydrogenase (quinone) (198 aa).

Residues 4 to 189 form the Flavodoxin-like domain; sequence ILVLYYSMYG…SIARYQGEYV (186 aa). Residues 10 to 15 and 78 to 80 each bind FMN; these read SMYGHI and TRF. An NAD(+)-binding site is contributed by Y12. A substrate-binding site is contributed by W98. FMN contacts are provided by residues 113–118 and H133; that span reads STGTGG.

The protein belongs to the WrbA family. FMN is required as a cofactor.

The catalysed reaction is a quinone + NADH + H(+) = a quinol + NAD(+). The enzyme catalyses a quinone + NADPH + H(+) = a quinol + NADP(+). This is NAD(P)H dehydrogenase (quinone) from Salmonella paratyphi C (strain RKS4594).